We begin with the raw amino-acid sequence, 186 residues long: Protein C (186 aa).

A compositionally biased stretch (polar residues) spans methionine 1–serine 12. The segment at methionine 1–alanine 43 is disordered.

This sequence belongs to the morbillivirus protein C family. Interacts with the phosphoprotein (via C-terminus); this interaction allows C to associate with the ribonucleocapsid.

It localises to the host nucleus. The protein resides in the host cytoplasmic vesicle. In terms of biological role, ribonucleocapsid-associated protein that interacts with the phosphoprotein (P), thereby increasing replication accuracy and processivity of the polymerase complex. This Homo sapiens (Human) protein is Protein C (P/V/C).